We begin with the raw amino-acid sequence, 546 residues long: 2-isopropylmalate synthase (546 aa).

The region spanning 8–271 is the Pyruvate carboxyltransferase domain; sequence ILIFDTTLRD…NSFFKRNPDS (264 aa). The Mn(2+) site is built by aspartate 17, histidine 208, histidine 210, and asparagine 244. The segment at 408-546 is regulatory domain; it reads QLCLVQVSCG…NKTFLSNPAN (139 aa).

It belongs to the alpha-IPM synthase/homocitrate synthase family. LeuA type 1 subfamily. In terms of assembly, homodimer. The cofactor is Mn(2+).

It is found in the cytoplasm. The enzyme catalyses 3-methyl-2-oxobutanoate + acetyl-CoA + H2O = (2S)-2-isopropylmalate + CoA + H(+). Its pathway is amino-acid biosynthesis; L-leucine biosynthesis; L-leucine from 3-methyl-2-oxobutanoate: step 1/4. Catalyzes the condensation of the acetyl group of acetyl-CoA with 3-methyl-2-oxobutanoate (2-ketoisovalerate) to form 3-carboxy-3-hydroxy-4-methylpentanoate (2-isopropylmalate). The polypeptide is 2-isopropylmalate synthase (Prochlorococcus marinus (strain MIT 9312)).